The sequence spans 255 residues: Electron transfer flavoprotein subunit beta (255 aa).

Ala2 is modified (N-acetylalanine). AMP-binding positions include Ala9, 39–42, Cys66, and 123–134; these read NPFC and GKQAIDDDCNQT. Positions 183–205 are recognition loop; the sequence is ADLRLNEPRYATLPNIMKAKKKK. At Lys200 the chain carries N6,N6,N6-trimethyllysine; by ETFBKMT; alternate. Lys200 is modified (N6-acetyllysine; alternate). N6-methyllysine; alternate is present on Lys200. The residue at position 203 (Lys203) is an N6,N6,N6-trimethyllysine; by ETFBKMT. Lys210 is modified (N6-acetyllysine; alternate). An N6-succinyllysine; alternate modification is found at Lys210. Residues Ser223 and Ser226 each carry the phosphoserine modification. Position 238 is an N6-acetyllysine (Lys238). Lys248 carries the post-translational modification N6-acetyllysine; alternate. Lys248 carries the post-translational modification N6-succinyllysine; alternate.

The protein belongs to the ETF beta-subunit/FixA family. As to quaternary structure, heterodimer composed of ETFA and ETFB. Identified in a complex that contains ETFA, ETFB and ETFRF1. Interacts with ACADM. In terms of processing, methylated. Trimethylation at Lys-200 and Lys-203 may negatively regulate the activity in electron transfer from acyl-CoA dehydrogenases.

The protein localises to the mitochondrion matrix. Its function is as follows. Heterodimeric electron transfer flavoprotein that accepts electrons from several mitochondrial dehydrogenases, including acyl-CoA dehydrogenases, glutaryl-CoA and sarcosine dehydrogenase. It transfers the electrons to the main mitochondrial respiratory chain via ETF-ubiquinone oxidoreductase. Required for normal mitochondrial fatty acid oxidation and normal amino acid metabolism. ETFB binds an AMP molecule that probably has a purely structural role. This Bos taurus (Bovine) protein is Electron transfer flavoprotein subunit beta.